Consider the following 204-residue polypeptide: Protein GrpE (204 aa).

Residues 1 to 12 (MSNEEQAQKDDA) show a composition bias toward basic and acidic residues. Positions 1 to 32 (MSNEEQAQKDDAQPVNEAAIDATAEQADAEVE) are disordered. The segment covering 17–26 (EAAIDATAEQ) has biased composition (low complexity).

The protein belongs to the GrpE family. In terms of assembly, homodimer.

It localises to the cytoplasm. Functionally, participates actively in the response to hyperosmotic and heat shock by preventing the aggregation of stress-denatured proteins, in association with DnaK and GrpE. It is the nucleotide exchange factor for DnaK and may function as a thermosensor. Unfolded proteins bind initially to DnaJ; upon interaction with the DnaJ-bound protein, DnaK hydrolyzes its bound ATP, resulting in the formation of a stable complex. GrpE releases ADP from DnaK; ATP binding to DnaK triggers the release of the substrate protein, thus completing the reaction cycle. Several rounds of ATP-dependent interactions between DnaJ, DnaK and GrpE are required for fully efficient folding. This Pseudoalteromonas atlantica (strain T6c / ATCC BAA-1087) protein is Protein GrpE.